Consider the following 828-residue polypeptide: MKLSRRSFMKANAVAAAAAAAGLSVPGVARAVVGQQEAIKWDKAPCRFCGTGCGVLVGTQQGRVVACQGDPDAPVNRGLNCIKGYFLPKIMYGKDRLTQPLLRMKNGKYDKEGEFTPITWDQAFDVMEEKFKTALKEKGPESIGMFGSGQWTIWEGYAASKLFKAGFRSNNIDPNARHCMASAVVGFMRTFGMDEPMGCYDDIEQADAFVLWGANMAEMHPILWSRITNRRLSNQDVTVAVLSTYQHRSFELADNGIIFTPQSDLVILNYIANYIIQNNAINQDFFSKHVNLRKGATDIGYGLRPTHPLEKAAKNPGSDASEPMSFEDYKAFVAEYTLEKTAEMTGVPKDQLEQLAQLYADPNKKVISYWTMGFNQHTRGVWANNLVYNLHLLTGKISQPGCGPFSLTGQPSACGTAREVGTFAHRLPADMVVTNEKHRDICEKKWNIPSGTIPAKIGLHAVAQDRALKDGKLNVYWTMCTNNMQAGPNINEERMPGWRDPRNFIIVSDPYPTVSALAADLILPTAMWVEKEGAYGNAERRTQFWRQQVQAPGEAKSDLWQLVQFSRRFKTEEVWPEELLAKKPELRGKTLYEVLYATPEVSKFPVSELAEDQLNDESRELGFYLQKGLFEEYAWFGRGHGHDLAPFDDYHKARGLRWPVVNGKETQWRYSEGNDPYVKAGEGYKFYGKPDGKAVIFALPFEPAAEAPDEEYDLWLSTGRVLEHWHTGSMTRRVPELHRAFPEAVLFIHPLDAKARDLRRGDKVKVVSRRGEVISIVETRGRNRPPQGLVYMPFFDAAQLVNKLTLDATDPLSKETDFKKCAVKLEKV.

A signal peptide (tat-type signal) is located at residues 1–31 (MKLSRRSFMKANAVAAAAAAAGLSVPGVARA). The 57-residue stretch at 39–95 (IKWDKAPCRFCGTGCGVLVGTQQGRVVACQGDPDAPVNRGLNCIKGYFLPKIMYGKD) folds into the 4Fe-4S Mo/W bis-MGD-type domain. The [4Fe-4S] cluster site is built by Cys-46, Cys-49, Cys-53, and Cys-81. Mo-bis(molybdopterin guanine dinucleotide)-binding positions include Lys-83, Gln-150, Asn-175, Cys-179, 212–219 (WGANMAEM), 243–247 (STYQH), 262–264 (QSD), Met-372, Gln-376, Asn-482, 508–509 (SD), Lys-531, Asp-558, and 718–727 (TGRVLEHWHT). Phe-794 is a substrate binding site. Positions 802 and 819 each coordinate Mo-bis(molybdopterin guanine dinucleotide).

It belongs to the prokaryotic molybdopterin-containing oxidoreductase family. NasA/NapA/NarB subfamily. As to quaternary structure, component of the periplasmic nitrate reductase NapAB complex composed of NapA and NapB. It depends on [4Fe-4S] cluster as a cofactor. Mo-bis(molybdopterin guanine dinucleotide) serves as cofactor. In terms of processing, predicted to be exported by the Tat system. The position of the signal peptide cleavage has not been experimentally proven.

The protein localises to the periplasm. It carries out the reaction 2 Fe(II)-[cytochrome] + nitrate + 2 H(+) = 2 Fe(III)-[cytochrome] + nitrite + H2O. In terms of biological role, catalytic subunit of the periplasmic nitrate reductase complex NapAB. Receives electrons from NapB and catalyzes the reduction of nitrate to nitrite. This Escherichia coli O157:H7 (strain EC4115 / EHEC) protein is Periplasmic nitrate reductase.